We begin with the raw amino-acid sequence, 226 residues long: ATP synthase F(0) complex subunit a (226 aa).

6 helical membrane passes run 6–26, 68–88, 97–117, 138–158, 164–184, and 189–209; these read FASF…IVLF, WALM…LGLL, QLSM…ITGF, IPML…ALAV, ITAG…LMSI, and ALIT…VAMI.

It belongs to the ATPase A chain family. As to quaternary structure, component of the ATP synthase complex composed at least of ATP5F1A/subunit alpha, ATP5F1B/subunit beta, ATP5MC1/subunit c (homooctomer), MT-ATP6/subunit a, MT-ATP8/subunit 8, ATP5ME/subunit e, ATP5MF/subunit f, ATP5MG/subunit g, ATP5MK/subunit k, ATP5MJ/subunit j, ATP5F1C/subunit gamma, ATP5F1D/subunit delta, ATP5F1E/subunit epsilon, ATP5PF/subunit F6, ATP5PB/subunit b, ATP5PD/subunit d, ATP5PO/subunit OSCP. ATP synthase complex consists of a soluble F(1) head domain (subunits alpha(3) and beta(3)) - the catalytic core - and a membrane F(0) domain - the membrane proton channel (subunits c, a, 8, e, f, g, k and j). These two domains are linked by a central stalk (subunits gamma, delta, and epsilon) rotating inside the F1 region and a stationary peripheral stalk (subunits F6, b, d, and OSCP). Interacts with DNAJC30; interaction is direct.

The protein resides in the mitochondrion inner membrane. The catalysed reaction is H(+)(in) = H(+)(out). Functionally, subunit a, of the mitochondrial membrane ATP synthase complex (F(1)F(0) ATP synthase or Complex V) that produces ATP from ADP in the presence of a proton gradient across the membrane which is generated by electron transport complexes of the respiratory chain. ATP synthase complex consist of a soluble F(1) head domain - the catalytic core - and a membrane F(1) domain - the membrane proton channel. These two domains are linked by a central stalk rotating inside the F(1) region and a stationary peripheral stalk. During catalysis, ATP synthesis in the catalytic domain of F(1) is coupled via a rotary mechanism of the central stalk subunits to proton translocation. With the subunit c (ATP5MC1), forms the proton-conducting channel in the F(0) domain, that contains two crucial half-channels (inlet and outlet) that facilitate proton movement from the mitochondrial intermembrane space (IMS) into the matrix. Protons are taken up via the inlet half-channel and released through the outlet half-channel, following a Grotthuss mechanism. The sequence is that of ATP synthase F(0) complex subunit a from Bos indicus (Zebu).